Here is a 503-residue protein sequence, read N- to C-terminus: Cytochrome P450 3A13 (503 aa).

Residue cysteine 442 coordinates heme.

Belongs to the cytochrome P450 family. Heme is required as a cofactor.

It localises to the endoplasmic reticulum membrane. It is found in the microsome membrane. It carries out the reaction an organic molecule + reduced [NADPH--hemoprotein reductase] + O2 = an alcohol + oxidized [NADPH--hemoprotein reductase] + H2O + H(+). Functionally, can activate aflatoxin B1 to a genotoxic product. This is Cytochrome P450 3A13 (Cyp3a13) from Mus musculus (Mouse).